A 123-amino-acid chain; its full sequence is Large ribosomal subunit protein uL14 (123 aa).

Belongs to the universal ribosomal protein uL14 family. In terms of assembly, part of the 50S ribosomal subunit. Forms a cluster with proteins L3 and L19. In the 70S ribosome, L14 and L19 interact and together make contacts with the 16S rRNA in bridges B5 and B8.

In terms of biological role, binds to 23S rRNA. Forms part of two intersubunit bridges in the 70S ribosome. The protein is Large ribosomal subunit protein uL14 of Blochmanniella floridana.